We begin with the raw amino-acid sequence, 411 residues long: Methylthioribose-1-phosphate isomerase (411 aa).

N-acetylserine is present on Ser-2. The Proton donor role is filled by Asp-280. Phosphoserine is present on Ser-351.

Belongs to the eIF-2B alpha/beta/delta subunits family. MtnA subfamily. As to quaternary structure, homodimer.

It localises to the cytoplasm. The protein localises to the nucleus. The catalysed reaction is 5-(methylsulfanyl)-alpha-D-ribose 1-phosphate = 5-(methylsulfanyl)-D-ribulose 1-phosphate. The protein operates within amino-acid biosynthesis; L-methionine biosynthesis via salvage pathway; L-methionine from S-methyl-5-thio-alpha-D-ribose 1-phosphate: step 1/6. Functionally, catalyzes the interconversion of methylthioribose-1-phosphate (MTR-1-P) into methylthioribulose-1-phosphate (MTRu-1-P). This is Methylthioribose-1-phosphate isomerase from Saccharomyces cerevisiae (strain JAY291) (Baker's yeast).